A 244-amino-acid polypeptide reads, in one-letter code: Dihydropteridine reductase (244 aa).

An N-acetylalanine modification is found at A2. 14–38 (LVYGGRGALGSRCVQAFRARNWWVA) provides a ligand contact to NADP(+). Residues K73, K79, K96, and K102 each carry the N6-succinyllysine modification. Y150 serves as the catalytic Proton acceptor.

Belongs to the short-chain dehydrogenases/reductases (SDR) family. Homodimer.

The catalysed reaction is 5,6,7,8-tetrahydropteridine + NAD(+) = 6,7-dihydropteridine + NADH + H(+). It carries out the reaction 5,6,7,8-tetrahydropteridine + NADP(+) = 6,7-dihydropteridine + NADPH + H(+). Functionally, catalyzes the conversion of quinonoid dihydrobiopterin into tetrahydrobiopterin. The protein is Dihydropteridine reductase (QDPR) of Homo sapiens (Human).